The sequence spans 136 residues: MLQPKRTKFRKMHKGRNRGLASGTDINFGTFGLQAIDRGRLTARQIESARRAITRCIKRQGKMWIRIFPDKPITQKPLEVRMGKGKGNVEYWVALVQPGKILYELEGVTEEESRAAFKLAAAKLPIKTTFVNKMVM.

This sequence belongs to the universal ribosomal protein uL16 family. As to quaternary structure, part of the 50S ribosomal subunit.

In terms of biological role, binds 23S rRNA and is also seen to make contacts with the A and possibly P site tRNAs. The protein is Large ribosomal subunit protein uL16 of Buchnera aphidicola subsp. Acyrthosiphon pisum (strain 5A).